The chain runs to 65 residues: Large ribosomal subunit protein bL35 (65 aa).

The interval 1–22 (MPKMKTKSSAKKRFKVTGSGKI) is disordered.

It belongs to the bacterial ribosomal protein bL35 family.

The polypeptide is Large ribosomal subunit protein bL35 (Flavobacterium johnsoniae (strain ATCC 17061 / DSM 2064 / JCM 8514 / BCRC 14874 / CCUG 350202 / NBRC 14942 / NCIMB 11054 / UW101) (Cytophaga johnsonae)).